We begin with the raw amino-acid sequence, 398 residues long: Acetate kinase 1 (398 aa).

N9 contacts Mg(2+). An ATP-binding site is contributed by K16. R89 is a substrate binding site. D146 serves as the catalytic Proton donor/acceptor. Residues 206-210, 281-283, and 329-333 each bind ATP; these read HLGNG, DCR, and GIGEN. E384 contacts Mg(2+).

It belongs to the acetokinase family. As to quaternary structure, homodimer. Requires Mg(2+) as cofactor. It depends on Mn(2+) as a cofactor.

It localises to the cytoplasm. The catalysed reaction is acetate + ATP = acetyl phosphate + ADP. The protein operates within metabolic intermediate biosynthesis; acetyl-CoA biosynthesis; acetyl-CoA from acetate: step 1/2. Its function is as follows. Catalyzes the formation of acetyl phosphate from acetate and ATP. Can also catalyze the reverse reaction. This Vibrio parahaemolyticus serotype O3:K6 (strain RIMD 2210633) protein is Acetate kinase 1.